The chain runs to 116 residues: U16-barytoxin-Tl1a (116 aa).

An N-terminal signal peptide occupies residues 1 to 20 (MKTIIVFLSLLVLATKFGDA). A propeptide spanning residues 21 to 74 (KEGVNQKQKKEVTQNEFREEYLNEMAAMSLVQQLEAIERALFENEAGRNSRQKR) is cleaved from the precursor. 3 cysteine pairs are disulfide-bonded: Cys75–Cys90, Cys82–Cys95, and Cys89–Cys110.

It belongs to the neurotoxin 14 (magi-1) family. 06 (ICK-Trit) subfamily. As to expression, expressed by the venom gland.

The protein localises to the secreted. In terms of biological role, ion channel inhibitor. The polypeptide is U16-barytoxin-Tl1a (Trittame loki (Brush-footed trapdoor spider)).